Consider the following 270-residue polypeptide: 4-hydroxy-tetrahydrodipicolinate reductase (270 aa).

NAD(+) is bound by residues 11-16 (GAGGRM) and Glu37. Arg38 is an NADP(+) binding site. Residues 101-103 (GTT) and 125-128 (APNM) contribute to the NAD(+) site. His158 functions as the Proton donor/acceptor in the catalytic mechanism. Residue His159 participates in (S)-2,3,4,5-tetrahydrodipicolinate binding. Residue Lys162 is the Proton donor of the active site. Residue 168–169 (GT) participates in (S)-2,3,4,5-tetrahydrodipicolinate binding.

This sequence belongs to the DapB family.

The protein resides in the cytoplasm. It carries out the reaction (S)-2,3,4,5-tetrahydrodipicolinate + NAD(+) + H2O = (2S,4S)-4-hydroxy-2,3,4,5-tetrahydrodipicolinate + NADH + H(+). The catalysed reaction is (S)-2,3,4,5-tetrahydrodipicolinate + NADP(+) + H2O = (2S,4S)-4-hydroxy-2,3,4,5-tetrahydrodipicolinate + NADPH + H(+). Its pathway is amino-acid biosynthesis; L-lysine biosynthesis via DAP pathway; (S)-tetrahydrodipicolinate from L-aspartate: step 4/4. Its function is as follows. Catalyzes the conversion of 4-hydroxy-tetrahydrodipicolinate (HTPA) to tetrahydrodipicolinate. This chain is 4-hydroxy-tetrahydrodipicolinate reductase, found in Shewanella putrefaciens (strain CN-32 / ATCC BAA-453).